The sequence spans 593 residues: Potassium channel KAT6 (593 aa).

The Cytoplasmic portion of the chain corresponds to 1-33 (MAASRSELLRPAFGEPSPSLGPFVVNPHTCSYR). Residues 34 to 54 (WWQKFLIVLVLYTAWASPFEL) traverse the membrane as a helical segment. Residues 55–64 (AMEKSASAAL) lie on the Extracellular side of the membrane. A helical transmembrane segment spans residues 65 to 85 (AVTELVVDAFFAVDIAVSFFV). Over 86–106 (AYRDASTGLLVTDRKKIATRH) the chain is Cytoplasmic. A helical transmembrane segment spans residues 107-129 (LARPCLALDVASTIPLQMIYRIV). Residues 130–138 (SGKRQALYG) are Extracellular-facing. The helical; Voltage-sensor transmembrane segment at 139-159 (LLNLLRLWRLRRVSKLFARLE) threads the bilayer. Over 160–173 (KDIRFSYLWTRLIK) the chain is Cytoplasmic. Residues 174-194 (LLYVTLFAVHFASCIYLWMAF) form a helical membrane-spanning segment. Over 195 to 221 (HHKAKELTWIGSQFHGFEDRSVWFCYT) the chain is Extracellular. The pore-forming intramembrane region spans 222–241 (CAVYWSITTLATVGYGDLHA). Topologically, residues 242–247 (ANTGEM) are extracellular. The chain crosses the membrane as a helical span at residues 248-268 (LFSIAFMLFNMGLTSYIIGNI). Residues 269–593 (TNLVVHETTN…RDGDHLFFSW (325 aa)) are Cytoplasmic-facing. A nucleoside 3',5'-cyclic phosphate is bound at residue 350–470 (LFQGVSDKLV…VVVFSNFVLY (121 aa)). Positions 522-593 (RVSIHEHLLN…RDGDHLFFSW (72 aa)) constitute a KHA domain.

This sequence belongs to the potassium channel family. Plant (TC 1.A.1.4) subfamily.

The protein resides in the membrane. Its function is as follows. Probable inward-rectifying potassium channel. Assuming opened or closed conformations in response to the voltage difference across the membrane, the channel is activated by hyperpolarization. The sequence is that of Potassium channel KAT6 from Oryza sativa subsp. japonica (Rice).